The primary structure comprises 202 residues: Probable 1-Cys peroxiredoxin (202 aa).

In terms of domain architecture, Thioredoxin spans 1 to 148 (STHGKIRIHD…VVRAVDSLLT (148 aa)). Cys30 serves as the catalytic Cysteine sulfenic acid (-SOH) intermediate. The short motif at 178-201 (KKLFPQGFETKDLPSKKGYLRFTK) is the Bipartite nuclear localization signal element.

The protein belongs to the peroxiredoxin family. Prx6 subfamily. As to expression, embryos.

The protein resides in the nucleus. It is found in the cytoplasm. The enzyme catalyses a hydroperoxide + [thioredoxin]-dithiol = an alcohol + [thioredoxin]-disulfide + H2O. Functionally, thiol-specific peroxidase that catalyzes the reduction of hydrogen peroxide and organic hydroperoxides to water and alcohols, respectively. Seems to contribute to the inhibition of germination during stress. The protein is Probable 1-Cys peroxiredoxin of Bromus secalinus (Rye brome).